Here is a 112-residue protein sequence, read N- to C-terminus: DNA-binding protein PF1087 (112 aa).

The protein belongs to the PDCD5 family.

The polypeptide is DNA-binding protein PF1087 (Pyrococcus furiosus (strain ATCC 43587 / DSM 3638 / JCM 8422 / Vc1)).